Here is a 293-residue protein sequence, read N- to C-terminus: Succinate--CoA ligase [ADP-forming] subunit alpha (293 aa).

Residues 21–24, K47, and 99–101 each bind CoA; these read TGKQ and ITE. A substrate-binding site is contributed by Y162. The active-site Tele-phosphohistidine intermediate is the H249.

It belongs to the succinate/malate CoA ligase alpha subunit family. Heterotetramer of two alpha and two beta subunits.

It catalyses the reaction succinate + ATP + CoA = succinyl-CoA + ADP + phosphate. The enzyme catalyses GTP + succinate + CoA = succinyl-CoA + GDP + phosphate. Its pathway is carbohydrate metabolism; tricarboxylic acid cycle; succinate from succinyl-CoA (ligase route): step 1/1. Functionally, succinyl-CoA synthetase functions in the citric acid cycle (TCA), coupling the hydrolysis of succinyl-CoA to the synthesis of either ATP or GTP and thus represents the only step of substrate-level phosphorylation in the TCA. The alpha subunit of the enzyme binds the substrates coenzyme A and phosphate, while succinate binding and nucleotide specificity is provided by the beta subunit. The chain is Succinate--CoA ligase [ADP-forming] subunit alpha from Methanothermobacter thermautotrophicus (strain ATCC 29096 / DSM 1053 / JCM 10044 / NBRC 100330 / Delta H) (Methanobacterium thermoautotrophicum).